The sequence spans 883 residues: Glutamate receptor 2 (883 aa).

The N-terminal stretch at 1 to 21 (MQKIMHISVLLSPVLWGLIFG) is a signal peptide. The Extracellular segment spans residues 22 to 543 (VSSNSIQIGG…GVFSFLDPLA (522 aa)). Cys-78 and Cys-330 are joined by a disulfide. 4 N-linked (GlcNAc...) asparagine glycosylation sites follow: Asn-256, Asn-370, Asn-406, and Asn-413. Positions 499, 501, and 506 each coordinate L-glutamate. The helical transmembrane segment at 544–564 (YEIWMCIVFAYIGVSVVLFLV) threads the bilayer. At 565–591 (SRFSPYEWHTEEFEDGRETQSSESTNE) the chain is on the cytoplasmic side. Positions 592-607 (FGIFNSLWFSLGAFMQ) form an intramembrane region, helical; Pore-forming. Residues 608-610 (QGC) lie within the membrane without spanning it. Cys-610 is lipidated: S-palmitoyl cysteine. The Cytoplasmic portion of the chain corresponds to 611-616 (DISPRS). A helical membrane pass occupies residues 617-637 (LSGRIVGGVWWFFTLIIISSY). The Extracellular segment spans residues 638-812 (TANLAAFLTV…EKTSALSLSN (175 aa)). Residues Ser-675 and Thr-676 each contribute to the L-glutamate site. At Ser-683 the chain carries Phosphoserine; by PKC. Phosphoserine; by PKG is present on Ser-717. Residue Glu-726 participates in L-glutamate binding. Cysteines 739 and 794 form a disulfide. Residues 813–833 (VAGVFYILVGGLGLAMLVALI) form a helical membrane-spanning segment. Over 834-883 (EFCYKSRAEAKRMKVAKNPQNINPSSSQNSQNFATYKEGYNVYGIESVKI) the chain is Cytoplasmic. Cys-836 carries S-palmitoyl cysteine lipidation. Phosphoserine is present on residues Ser-860 and Ser-863. Residues 867–877 (ATYKEGYNVYG) form a required for interaction with IQSEC1 region. Tyr-876 is modified (phosphotyrosine). Residue Ser-880 is modified to Phosphoserine.

The protein belongs to the glutamate-gated ion channel (TC 1.A.10.1) family. GRIA2 subfamily. As to quaternary structure, homotetramer or heterotetramer of pore-forming glutamate receptor subunits. Tetramers may be formed by the dimerization of dimers. May interact with MPP4. Forms a ternary complex with GRIP1 and CSPG4. Interacts with ATAD1 in an ATP-dependent manner. ATAD1-catalyzed ATP hydrolysis disrupts binding to ATAD1 and to GRIP1 and leads to AMPAR complex disassembly. Interacts with GRIP2. Interacts with GRIP1. Interacts with NSF via its C-terminus. Interacts with CACNG2, PICK1 and GRIP2. Interacts with GRIA1 and SYNDIG1. Part of a complex containing GRIA2, NSF and NAPA and/or NAPB. Interacts with SNX27 (via PDZ domain); the interaction is required for recycling to the plasma membrane when endocytosed and prevent degradation in lysosomes. Interacts with LRFN1. Found in a complex with GRIA1, GRIA3, GRIA4, CNIH2, CNIH3, CACNG2, CACNG3, CACNG4, CACNG5, CACNG7 and CACNG8. Interacts with CACNG5. Interacts with OLFM2. Interacts with AP4B1, AP4E1 and AP4M1; probably indirect it mediates the somatodendritic localization of GRIA2 in neurons. Forms a complex with GRIP1, NSG1 and STX12; controls the intracellular fate of AMPAR and the endosomal sorting of the GRIA2 subunit toward recycling and membrane targeting. Interacts with IQSEC1; the interaction is required for ARF6 activation. Interacts (heterotetramer form) with CNIH2 and CNIH3; this interaction promotes expression at the plasma membrane and extensively modulates their gating properties by slowing deactivation and desensitization kinetics. In terms of processing, palmitoylated. Depalmitoylated upon L-glutamate stimulation. Cys-610 palmitoylation leads to Golgi retention and decreased cell surface expression. In contrast, Cys-836 palmitoylation does not affect cell surface expression but regulates stimulation-dependent endocytosis. Post-translationally, phosphorylation at Tyr-876 is required for interaction with IQSEC1 and ARF6 activation, which in turn triggers AMPAR internalization for persistent synaptic depression. Ubiquitinated by RNF167, leading to its degradation. In terms of processing, N-glycosylated. In terms of tissue distribution, detected in forebrain. Detected in dendrites of neuronal cells. Expressed in the pyramidal cell layers of CA1 and CA3 and in the granule cell layer of the dentate gyrus.

The protein localises to the cell membrane. Its subcellular location is the postsynaptic cell membrane. The protein resides in the postsynaptic density membrane. The enzyme catalyses Ca(2+)(in) = Ca(2+)(out). The catalysed reaction is Na(+)(in) = Na(+)(out). Its function is as follows. Ionotropic glutamate receptor that functions as a ligand-gated cation channel, gated by L-glutamate and glutamatergic agonists such as alpha-amino-3-hydroxy-5-methyl-4-isoxazolepropionic acid (AMPA), quisqualic acid, and kainic acid. L-glutamate acts as an excitatory neurotransmitter at many synapses in the central nervous system and plays an important role in fast excitatory synaptic transmission. Binding of the excitatory neurotransmitter L-glutamate induces a conformation change, leading to the opening of the cation channel, and thereby converts the chemical signal to an electrical impulse upon entry of monovalent and divalent cations such as sodium and calcium. The receptor then desensitizes rapidly and enters in a transient inactive state, characterized by the presence of bound agonist. In the presence of CACNG4 or CACNG7 or CACNG8, shows resensitization which is characterized by a delayed accumulation of current flux upon continued application of L-glutamate. Through complex formation with NSG1, GRIP1 and STX12 controls the intracellular fate of AMPAR and the endosomal sorting of the GRIA2 subunit toward recycling and membrane targeting. This chain is Glutamate receptor 2, found in Rattus norvegicus (Rat).